A 161-amino-acid chain; its full sequence is ATP synthase subunit b 1 (161 aa).

Residues 6-26 form a helical membrane-spanning segment; that stretch reads ETWVAIAFVILMVVFGYLGVF.

It belongs to the ATPase B chain family. F-type ATPases have 2 components, F(1) - the catalytic core - and F(0) - the membrane proton channel. F(1) has five subunits: alpha(3), beta(3), gamma(1), delta(1), epsilon(1). F(0) has three main subunits: a(1), b(2) and c(10-14). The alpha and beta chains form an alternating ring which encloses part of the gamma chain. F(1) is attached to F(0) by a central stalk formed by the gamma and epsilon chains, while a peripheral stalk is formed by the delta and b chains.

It localises to the cell inner membrane. Functionally, f(1)F(0) ATP synthase produces ATP from ADP in the presence of a proton or sodium gradient. F-type ATPases consist of two structural domains, F(1) containing the extramembraneous catalytic core and F(0) containing the membrane proton channel, linked together by a central stalk and a peripheral stalk. During catalysis, ATP synthesis in the catalytic domain of F(1) is coupled via a rotary mechanism of the central stalk subunits to proton translocation. Its function is as follows. Component of the F(0) channel, it forms part of the peripheral stalk, linking F(1) to F(0). In Bradyrhizobium diazoefficiens (strain JCM 10833 / BCRC 13528 / IAM 13628 / NBRC 14792 / USDA 110), this protein is ATP synthase subunit b 1.